We begin with the raw amino-acid sequence, 253 residues long: H repeat-associated putative transposase YbfD (253 aa).

It belongs to the transposase 11 family.

The chain is H repeat-associated putative transposase YbfD (ybfD) from Escherichia coli (strain K12).